The sequence spans 290 residues: Microtubule-associated protein P320 (290 aa).

Repeats lie at residues 1–38, 39–76, 77–114, 115–152, 153–190, 191–228, 229–266, and 267–290; these read SEYR…PIDP and SEYR…DESH. The segment at 251–290 is disordered; it reads SHFLTTTHEAYKPIDPSEYRQKRTVGEEVTTDMRHVDESH. Residues 259–290 are compositionally biased toward basic and acidic residues; sequence EAYKPIDPSEYRQKRTVGEEVTTDMRHVDESH.

The protein localises to the cytoplasm. It localises to the cytoskeleton. The polypeptide is Microtubule-associated protein P320 (Trypanosoma brucei brucei).